Reading from the N-terminus, the 224-residue chain is MLDNPKLTARQQQVLDLIQNTMARTGAPPTRAEIAAELGFKSANAAEEHLQALARKGAIELVSGTSRGIRLHSETLRSIHAARSGPSGAGNPGSSPWVLPLIGRVAAGSPILAQEHVEQTYSVENGLFQHKPDYLLKVRGMSMRDAGIIDGDLLAVQATREARNGQIIVARLGDDVTVKRLRRTASTIELLPENPDYPVIVVQPGEPFEIEGLAVGLIRNTMLM.

Positions 31-51 form a DNA-binding region, H-T-H motif; the sequence is RAEIAAELGFKSANAAEEHLQ. Residues serine 142 and lysine 179 each act as for autocatalytic cleavage activity in the active site.

This sequence belongs to the peptidase S24 family. As to quaternary structure, homodimer.

The catalysed reaction is Hydrolysis of Ala-|-Gly bond in repressor LexA.. Functionally, represses a number of genes involved in the response to DNA damage (SOS response), including recA and lexA. In the presence of single-stranded DNA, RecA interacts with LexA causing an autocatalytic cleavage which disrupts the DNA-binding part of LexA, leading to derepression of the SOS regulon and eventually DNA repair. This Verminephrobacter eiseniae (strain EF01-2) protein is LexA repressor.